The following is a 338-amino-acid chain: S-adenosylmethionine:tRNA ribosyltransferase-isomerase (338 aa).

Belongs to the QueA family. As to quaternary structure, monomer.

It localises to the cytoplasm. The enzyme catalyses 7-aminomethyl-7-carbaguanosine(34) in tRNA + S-adenosyl-L-methionine = epoxyqueuosine(34) in tRNA + adenine + L-methionine + 2 H(+). It functions in the pathway tRNA modification; tRNA-queuosine biosynthesis. In terms of biological role, transfers and isomerizes the ribose moiety from AdoMet to the 7-aminomethyl group of 7-deazaguanine (preQ1-tRNA) to give epoxyqueuosine (oQ-tRNA). The protein is S-adenosylmethionine:tRNA ribosyltransferase-isomerase of Carboxydothermus hydrogenoformans (strain ATCC BAA-161 / DSM 6008 / Z-2901).